We begin with the raw amino-acid sequence, 508 residues long: 25-hydroxyvitamin D-1 alpha hydroxylase, mitochondrial (508 aa).

Heme is bound at residue Cys455.

This sequence belongs to the cytochrome P450 family. The cofactor is heme. Kidney.

The protein resides in the mitochondrion membrane. The enzyme catalyses calcidiol + 2 reduced [adrenodoxin] + O2 + 2 H(+) = calcitriol + 2 oxidized [adrenodoxin] + H2O. The catalysed reaction is secalciferol + 2 reduced [adrenodoxin] + O2 + 2 H(+) = calcitetrol + 2 oxidized [adrenodoxin] + H2O. It carries out the reaction 25-hydroxy-24-oxocalciol + 2 reduced [adrenodoxin] + O2 + 2 H(+) = (1S)-1,25-dihydroxy-24-oxocalciol + 2 oxidized [adrenodoxin] + H2O. It catalyses the reaction 25-hydroxyvitamin D2 + 2 reduced [adrenodoxin] + O2 + 2 H(+) = 1alpha,25-dihydroxyvitamin D2 + 2 oxidized [adrenodoxin] + H2O. The protein operates within hormone biosynthesis; vitamin D biosynthesis. With respect to regulation, activated by cardiolipin and dioleoyl phosphatidylethanolamine (DOPE), phospholipids found in the inner mitochondrial membrane. Inhibited by high substrate concentration. Functionally, a cytochrome P450 monooxygenase involved in vitamin D metabolism and in calcium and phosphorus homeostasis. Catalyzes the rate-limiting step in the activation of vitamin D in the kidney, namely the hydroxylation of 25-hydroxyvitamin D3/calcidiol at the C1alpha-position to form the hormonally active form of vitamin D3, 1alpha,25-dihydroxyvitamin D3/calcitriol that acts via the vitamin D receptor (VDR). Has 1alpha-hydroxylase activity on vitamin D intermediates of the CYP24A1-mediated inactivation pathway. Converts 24R,25-dihydroxyvitamin D3/secalciferol to 1-alpha,24,25-trihydroxyvitamin D3, an active ligand of VDR. Also active on 25-hydroxyvitamin D2. Mechanistically, uses molecular oxygen inserting one oxygen atom into a substrate, and reducing the second into a water molecule, with two electrons provided by NADPH via FDXR/adrenodoxin reductase and FDX1/adrenodoxin. In Homo sapiens (Human), this protein is 25-hydroxyvitamin D-1 alpha hydroxylase, mitochondrial (CYP27B1).